Here is a 550-residue protein sequence, read N- to C-terminus: CTP synthase (550 aa).

An amidoligase domain region spans residues 1 to 270 (MTKYVFVTGG…DNIVCEALGL (270 aa)). S13 is a binding site for CTP. S13 is a UTP binding site. Residues 14–19 (SLGKGI) and D71 contribute to the ATP site. Positions 71 and 144 each coordinate Mg(2+). CTP is bound by residues 151-153 (DIE), 191-196 (KTKPTQ), and K227. UTP is bound by residues 191–196 (KTKPTQ) and K227. The Glutamine amidotransferase type-1 domain occupies 295–545 (TIGMVGKYVD…IRAALEHKAQ (251 aa)). An L-glutamine-binding site is contributed by G356. C383 acts as the Nucleophile; for glutamine hydrolysis in catalysis. Residues 384–387 (LGMQ) and E407 contribute to the L-glutamine site. Residues 430 to 459 (VERRDNSSDLGGTMRKGAQRCPIRPGTRAQ) form a disordered region. Residue R473 participates in L-glutamine binding. Catalysis depends on residues H518 and E520.

This sequence belongs to the CTP synthase family. Homotetramer.

It carries out the reaction UTP + L-glutamine + ATP + H2O = CTP + L-glutamate + ADP + phosphate + 2 H(+). The enzyme catalyses L-glutamine + H2O = L-glutamate + NH4(+). It catalyses the reaction UTP + NH4(+) + ATP = CTP + ADP + phosphate + 2 H(+). It functions in the pathway pyrimidine metabolism; CTP biosynthesis via de novo pathway; CTP from UDP: step 2/2. With respect to regulation, allosterically activated by GTP, when glutamine is the substrate; GTP has no effect on the reaction when ammonia is the substrate. The allosteric effector GTP functions by stabilizing the protein conformation that binds the tetrahedral intermediate(s) formed during glutamine hydrolysis. Inhibited by the product CTP, via allosteric rather than competitive inhibition. In terms of biological role, catalyzes the ATP-dependent amination of UTP to CTP with either L-glutamine or ammonia as the source of nitrogen. Regulates intracellular CTP levels through interactions with the four ribonucleotide triphosphates. This is CTP synthase from Bordetella parapertussis (strain 12822 / ATCC BAA-587 / NCTC 13253).